The sequence spans 1062 residues: Inversin (1062 aa).

16 ANK repeats span residues 13–42 (SLAS…ALRD), 47–76 (FGRT…DVNK), 80–110 (SRRT…WMQK), 113–144 (EEMT…EVDT), 148–177 (NKQT…NIGI), 181–213 (EGKI…TESL), 220–250 (EGRT…NITS), 254–283 (LFRT…SGTI), 288–317 (QGAT…VKDD), 321–350 (EGRT…DIDI), 356–385 (YGGT…QVDA), 389–418 (MKHT…RVDL), 422–451 (DGHS…NPNV), 455–484 (AGRT…DPNI), 488–517 (EGRT…FPNQ), and 523–553 (ERYT…SIAA). A 3-hydroxyasparagine modification is found at Asn75. The short motif at 490-498 (RTALHWSCN) is the D-box 1 element. Residues 555–584 (QDIAAFKIQAVYKGYKVRKAFRDRKNLLMK) form the IQ 1 domain. A compositionally biased stretch (basic and acidic residues) spans 589–608 (RKDAAAKKREEENKRKEAEQ). Positions 589 to 849 (RKDAAAKKRE…QDKLIGGVSS (261 aa)) are disordered. Polar residues-rich tracts occupy residues 636-658 (QNEG…TVQS) and 676-689 (QGDS…TASR). Residues 690-700 (KPSETPIEHCR) are compositionally biased toward basic and acidic residues. Residues 713-724 (GGNSSKNQGTSS) are compositionally biased toward polar residues. 2 stretches are compositionally biased toward basic and acidic residues: residues 725-741 (VEKR…RCEE) and 775-788 (DHPR…DRAA). The short motif at 907 to 915 (RKELFRRKN) is the D-box 2 element. Residues 914-943 (KNKAAAVIQRAWRSYQLRKHLSRLLHLKQL) enclose the IQ 2 domain. Residues 1042-1062 (RSKKFSYNLQPSSQSKNKPKL) are disordered. Positions 1046-1062 (FSYNLQPSSQSKNKPKL) are enriched in polar residues.

Interacts with microtubules. Interacts with NPHP1. Interacts with DVL1, PRICKLE (PRICKLE1 or PRICKLE2) and Strabismus (VANGL1 or VANGL2). Binds calmodulin via its IQ domains. Interacts with APC2. Interacts with alpha-, beta-, and gamma-catenin. Interacts with N-cadherin (CDH2). Interacts with NPHP3. Interacts with IQCB1; the interaction likely requires additional interactors. Component of a complex containing at least ANKS6, INVS, NEK8 and NPHP3. ANKS6 may organize complex assembly by linking INVS and NPHP3 to NEK8 and INVS may target the complex to the proximal ciliary axoneme. May be ubiquitinated via its interaction with APC2. In terms of processing, hydroxylated at Asn-75, most probably by HIF1AN. Strongly expressed in the primary cilia of renal cells, especially in the varicosities, swellings observed in the cilia. Localizes in the node monocilia and in other 9+0 monocilia, including those of kidney epithelial cells and the pituitary gland, but it does not localize to 9+2 cilia (at protein level). In adult, it is expressed at high level in liver and kidney. Weakly or not expressed in other tissues.

It is found in the cytoplasm. The protein resides in the cytoskeleton. The protein localises to the membrane. Its subcellular location is the nucleus. It localises to the perinuclear region. It is found in the spindle. In terms of biological role, required for normal renal development and establishment of left-right axis. Probably acts as a molecular switch between different Wnt signaling pathways. Inhibits the canonical Wnt pathway by targeting cytoplasmic disheveled (DVL1) for degradation by the ubiquitin-proteasome. This suggests that it is required in renal development to oppose the repression of terminal differentiation of tubular epithelial cells by Wnt signaling. Involved in the organization of apical junctions in kidney cells together with NPHP1, NPHP4 and RPGRIP1L/NPHP8. Does not seem to be strictly required for ciliogenesis. This Mus musculus (Mouse) protein is Inversin (Invs).